The chain runs to 99 residues: Large ribosomal subunit protein uL23 (99 aa).

This sequence belongs to the universal ribosomal protein uL23 family. In terms of assembly, part of the 50S ribosomal subunit. Contacts protein L29, and trigger factor when it is bound to the ribosome.

In terms of biological role, one of the early assembly proteins it binds 23S rRNA. One of the proteins that surrounds the polypeptide exit tunnel on the outside of the ribosome. Forms the main docking site for trigger factor binding to the ribosome. The polypeptide is Large ribosomal subunit protein uL23 (Rhodopseudomonas palustris (strain BisB5)).